The primary structure comprises 320 residues: D-alanine--D-alanine ligase (320 aa).

Residues 120 to 314 (SSWFFANSIN…FTNLIAEIIK (195 aa)) form the ATP-grasp domain. ATP is bound at residue 147–198 (MKRPYVIKPLTQGSSIGVEVIFEEDDFNFADYDFPYGDQVVIERYIKGREFQ). The Mg(2+) site is built by E267, E281, and N283.

This sequence belongs to the D-alanine--D-alanine ligase family. The cofactor is Mg(2+). It depends on Mn(2+) as a cofactor.

It localises to the cytoplasm. The enzyme catalyses 2 D-alanine + ATP = D-alanyl-D-alanine + ADP + phosphate + H(+). It participates in cell wall biogenesis; peptidoglycan biosynthesis. In terms of biological role, cell wall formation. The protein is D-alanine--D-alanine ligase of Rickettsia akari (strain Hartford).